A 218-amino-acid chain; its full sequence is Large ribosomal subunit protein uL3 (218 aa).

The protein belongs to the universal ribosomal protein uL3 family. As to quaternary structure, part of the 50S ribosomal subunit. Forms a cluster with proteins L14 and L19.

Functionally, one of the primary rRNA binding proteins, it binds directly near the 3'-end of the 23S rRNA, where it nucleates assembly of the 50S subunit. This Corynebacterium aurimucosum (strain ATCC 700975 / DSM 44827 / CIP 107346 / CN-1) (Corynebacterium nigricans) protein is Large ribosomal subunit protein uL3.